A 391-amino-acid chain; its full sequence is ATPase GET3C (391 aa).

The N-terminal 50 residues, 1 to 50 (MAALLLLNRVSRSTSSISLHRVAGTLGFNSFNAQIHGDRISGTLFRVRSL), are a transit peptide targeting the mitochondrion. 77-84 (KGGVGKTS) is an ATP binding site. Asp-106 is an active-site residue. Asn-328 contributes to the ATP binding site.

Belongs to the arsA ATPase family.

The protein resides in the mitochondrion matrix. It catalyses the reaction ATP + H2O = ADP + phosphate + H(+). The sequence is that of ATPase GET3C from Arabidopsis thaliana (Mouse-ear cress).